We begin with the raw amino-acid sequence, 134 residues long: MVTLFLSPSCTSCRKARAWLVKHEVDFQEHNIITSPLSRDELMSILSFTENGTEDIISTRSKVFQKLDVDVEELSISDLIDLIAKNPSLLRRPIIMDQKRMQIGFNEDEIRAFLSRDYRKQELRQATIKAEIEG.

Cys-10 and Cys-13 are joined by a disulfide.

This sequence belongs to the ArsC family. Spx subfamily. As to quaternary structure, interacts with the C-terminal domain of the alpha subunit of the RNAP.

The protein localises to the cytoplasm. Its function is as follows. Global transcriptional regulator that plays a key role in stress response and exerts either positive or negative regulation of genes. Acts by interacting with the C-terminal domain of the alpha subunit of the RNA polymerase (RNAP). This interaction can enhance binding of RNAP to the promoter region of target genes and stimulate their transcription, or block interaction of RNAP with activator. This is Global transcriptional regulator Spx from Streptococcus pyogenes serotype M3 (strain ATCC BAA-595 / MGAS315).